Consider the following 230-residue polypeptide: Homeobox protein Hox-B5 (230 aa).

The tract at residues Gly-1–Pro-135 is disordered. Residues Phe-49–Leu-65 are compositionally biased toward polar residues. The segment covering Ala-87–Ser-103 has biased composition (low complexity). The Antp-type hexapeptide signature appears at Ile-137–Arg-142. The homeobox DNA-binding region spans Gly-155 to Asn-214.

This sequence belongs to the Antp homeobox family.

It localises to the nucleus. In terms of biological role, sequence-specific transcription factor which is part of a developmental regulatory system that provides cells with specific positional identities on the anterior-posterior axis. The sequence is that of Homeobox protein Hox-B5 (hoxb5) from Xenopus laevis (African clawed frog).